A 171-amino-acid polypeptide reads, in one-letter code: 3-hydroxydecanoyl-[acyl-carrier-protein] dehydratase (171 aa).

His-70 is a catalytic residue.

This sequence belongs to the thioester dehydratase family. FabA subfamily. Homodimer.

The protein resides in the cytoplasm. The catalysed reaction is a (3R)-hydroxyacyl-[ACP] = a (2E)-enoyl-[ACP] + H2O. The enzyme catalyses (3R)-hydroxydecanoyl-[ACP] = (2E)-decenoyl-[ACP] + H2O. It catalyses the reaction (2E)-decenoyl-[ACP] = (3Z)-decenoyl-[ACP]. It functions in the pathway lipid metabolism; fatty acid biosynthesis. Functionally, necessary for the introduction of cis unsaturation into fatty acids. Catalyzes the dehydration of (3R)-3-hydroxydecanoyl-ACP to E-(2)-decenoyl-ACP and then its isomerization to Z-(3)-decenoyl-ACP. Can catalyze the dehydratase reaction for beta-hydroxyacyl-ACPs with saturated chain lengths up to 16:0, being most active on intermediate chain length. In Shewanella woodyi (strain ATCC 51908 / MS32), this protein is 3-hydroxydecanoyl-[acyl-carrier-protein] dehydratase.